The sequence spans 60 residues: Arabinogalactan protein 14 (60 aa).

The first 28 residues, 1–28 (MEAMKMKLYVVVLVAVIAFSTVHQTVAA), serve as a signal peptide directing secretion. 4-hydroxyproline occurs at positions 32, 34, and 36. Residues Pro32, Pro34, and Pro36 are each glycosylated (O-linked (Ara...) hydroxyproline). Ser38 is lipidated: GPI-anchor amidated serine. The propeptide at 39–60 (DASSFIPTFFASVAVMAFGFFF) is removed in mature form.

Belongs to the AG-peptide AGP family. In terms of processing, contains 4-hydroxyproline; hydroxylated on Pro-32, Pro-34 and Pro-36. O-glycosylated on hydroxyprolines; noncontiguous hydroxylproline residues are glycosylated with arabinogalactan.

The protein localises to the cell membrane. Its function is as follows. Proteoglycan that seems to be implicated in diverse developmental roles such as differentiation, cell-cell recognition, embryogenesis and programmed cell death. Involved in the regulation of root hair elongation. The chain is Arabinogalactan protein 14 from Arabidopsis thaliana (Mouse-ear cress).